The primary structure comprises 1264 residues: Kinesin-like protein KIN-14B (1264 aa).

The span at 1–10 shows a compositional bias: polar residues; it reads MAEQKSTNMW. The disordered stretch occupies residues 1 to 52; it reads MAEQKSTNMWNWEVTGFESKKSPSSEEGVHRTPSSMLRRYSIPKNSLPPHSS. A compositionally biased stretch (basic and acidic residues) spans 18–30; the sequence is ESKKSPSSEEGVH. A coiled-coil region spans residues 53 to 84; sequence ELASKVQSLKDKVQLAKDDYVGLRQEATDLQE. The region spanning 138 to 452 is the Kinesin motor domain; sequence NVKVFCRARP…LNYAARARNT (315 aa). 219 to 226 serves as a coordination point for ATP; the sequence is GQTHAGKT. Coiled-coil stretches lie at residues 462–511, 545–592, and 617–640; these read IKKW…YNEV, QLRN…LKSD, and TKKL…ENEK. The disordered stretch occupies residues 588 to 615; the sequence is ALKSDMTRSRDPLEPQPRAAENTLDSSA. Positions 589–600 are enriched in basic and acidic residues; the sequence is LKSDMTRSRDPL. Over residues 652-668 the composition is skewed to low complexity; the sequence is SSTQVSSPSSKASPTVQ. 2 disordered regions span residues 652-684 and 1117-1136; these read SSTQ…SVDK and PEQE…SISS.

Belongs to the TRAFAC class myosin-kinesin ATPase superfamily. Kinesin family. KIN-14 subfamily. In terms of assembly, homodimer and heterodimer with KCA1. Interacts with CDKA-1. Interacts with At4g14310. Expressed in roots, leaves, stems and flowers.

Its subcellular location is the cell membrane. Functionally, kinesin-like protein required for chloroplast movements and anchor to the plasma membrane. Mediates chloroplast movement via chloroplast actin (cp-actin) filaments. Required for the chloroplast avoidance response under high intensity blue light. Mediates redundantly with CHUP1 the nuclear avoidance response under high intensity blue light. May be involved in division plane determination. This chain is Kinesin-like protein KIN-14B, found in Arabidopsis thaliana (Mouse-ear cress).